A 485-amino-acid chain; its full sequence is Delta(14)-sterol reductase ERG24A (485 aa).

4 helical membrane-spanning segments follow: residues 18–38, 77–97, 131–151, and 155–175; these read FFGPPGAFAISFFLPVLVYVF, GLVSWNGTLAVIGYNVLSLIL, LAVLAAGTIAQGAEFPVWTFM, and FIQILSANIIYSYLVSTFVYV. Residue N240 is glycosylated (N-linked (GlcNAc...) asparagine). 4 helical membrane passes run 259–279, 285–305, 319–339, and 431–451; these read ILITAVQALYVFDSWWNEPAI, ITTDGFGMMLAFGDIVWVPYV, SLGPLGLAAMLGLIGLGFYIF, and AQGWGMLITYFYILYFGILLI.

Belongs to the ERG4/ERG24 family.

It is found in the endoplasmic reticulum membrane. The catalysed reaction is 4,4-dimethyl-5alpha-cholesta-8,24-dien-3beta-ol + NADP(+) = 4,4-dimethyl-5alpha-cholesta-8,14,24-trien-3beta-ol + NADPH + H(+). It functions in the pathway steroid metabolism; ergosterol biosynthesis. In terms of biological role, delta(14)-sterol reductase; part of the third module of ergosterol biosynthesis pathway that includes the late steps of the pathway. Catalyzes the reduction of the C14=C15 double bond within 4,4,24-trimethyl ergosta-8,14,24(28)-trienolto produce 4,4-dimethylfecosterol. The third module or late pathway involves the ergosterol synthesis itself through consecutive reactions that mainly occur in the endoplasmic reticulum (ER) membrane. Firstly, the squalene synthase ERG9 catalyzes the condensation of 2 farnesyl pyrophosphate moieties to form squalene, which is the precursor of all steroids. Squalene synthase is crucial for balancing the incorporation of farnesyl diphosphate (FPP) into sterol and nonsterol isoprene synthesis. Secondly, squalene is converted into lanosterol by the consecutive action of the squalene epoxidase ERG1 and the lanosterol synthase ERG7. Then, the delta(24)-sterol C-methyltransferase ERG6 methylates lanosterol at C-24 to produce eburicol. Eburicol is the substrate of the sterol 14-alpha demethylase encoded by CYP51A, CYP51B and CYP51C, to yield 4,4,24-trimethyl ergosta-8,14,24(28)-trienol. CYP51B encodes the enzyme primarily responsible for sterol 14-alpha-demethylation, and plays an essential role in ascospore formation. CYP51A encodes an additional sterol 14-alpha-demethylase, induced on ergosterol depletion and responsible for the intrinsic variation in azole sensitivity. The third CYP51 isoform, CYP51C, does not encode a sterol 14-alpha-demethylase, but is required for full virulence on host wheat ears. The C-14 reductase ERG24 then reduces the C14=C15 double bond which leads to 4,4-dimethylfecosterol. A sequence of further demethylations at C-4, involving the C-4 demethylation complex containing the C-4 methylsterol oxidases ERG25, the sterol-4-alpha-carboxylate 3-dehydrogenase ERG26 and the 3-keto-steroid reductase ERG27, leads to the production of fecosterol via 4-methylfecosterol. ERG28 has a role as a scaffold to help anchor ERG25, ERG26 and ERG27 to the endoplasmic reticulum. The C-8 sterol isomerase ERG2 then catalyzes the reaction which results in unsaturation at C-7 in the B ring of sterols and thus converts fecosterol to episterol. The sterol-C5-desaturases ERG3A and ERG3BB then catalyze the introduction of a C-5 double bond in the B ring to produce 5-dehydroepisterol. The C-22 sterol desaturases ERG5A and ERG5B further convert 5-dehydroepisterol into ergosta-5,7,22,24(28)-tetraen-3beta-ol by forming the C-22(23) double bond in the sterol side chain. Finally, ergosta-5,7,22,24(28)-tetraen-3beta-ol is substrate of the C-24(28) sterol reductase ERG4 to produce ergosterol. This chain is Delta(14)-sterol reductase ERG24A, found in Gibberella zeae (strain ATCC MYA-4620 / CBS 123657 / FGSC 9075 / NRRL 31084 / PH-1) (Wheat head blight fungus).